The following is a 365-amino-acid chain: Quinolone epoxide rearrangement protein asqO (365 aa).

Belongs to the quinolone epoxide rearrangement protein penF family.

It carries out the reaction (1'E,3'E)-5-(3,3-dimethyloxiran-2-yl)-3-methylhexa-1,3-dienyl-quinolinone B = aspoquinolone A. The catalysed reaction is (1'E,3'E)-5-(3,3-dimethyloxiran-2-yl)-3-methylhexa-1,3-dienyl-quinolinone B = aspoquinolone B. It participates in secondary metabolite biosynthesis. It functions in the pathway alkaloid biosynthesis. The protein operates within mycotoxin biosynthesis. In terms of biological role, quinolone epoxide rearrangement protein; part of the gene cluster that mediates the biosynthesis of the aspoquinolone mycotoxins. Within the pathway, asqO catalyzes an enzymatic 3-exo-tet cyclization to yield the cyclopropyl-THF ring system in aspoquinolone. The first step of the pathway is catalyzed by the nonribosomal peptide synthetase asqK that condenses anthranilic acid and O-methyl-L-tyrosine to produce 4'-methoxycyclopeptin. 4'-methoxycyclopeptin is then converted to 4'-methoxydehydrocyclopeptin by the ketoglutarate-dependent dioxygenase asqJ. AsqJ also converts its first product 4'-methoxydehydrocyclopeptin to 4'-methoxycyclopenin. The following conversion of 4'-methoxycyclopenin into 4'-methoxyviridicatin is catalyzed by the cyclopenase asqI. 4'-methoxyviridicatin is the precursor of quinolone natural products, and is further converted to quinolinone B. The prenyltransferase asqH1 then catalyzes the canonical Friedel-Crafts alkylation of quinolinone B with dimethylallyl cation to yield dimethylallyl quinolone, which is subjected to FAD-dependent dehydrogenation by the FAD-linked oxidoreductase asqF to yield conjugated aryl diene. The delta(3') double bond then serves as the site of the second alkylation with DMAPP catalyzed by the prenyltransferase asqH2 to yield a carbenium ion intermediate, which can be attacked by H(2)O to yield a styrenyl quinolone containing a C3'-hydroxyprenyl chain. The FAD-dependent monooxygenase asqG performs epoxidation of the terminal C7'-C8' olefin. Finally, after dehydratation of the epoxide at C3 by asqC, the quinolone epoxide rearrangement protein asqO catalyzes an enzymatic 3-exo-tet cyclization to yield the cyclopropyl-THF ring system in aspoquinolone. In Emericella nidulans (strain FGSC A4 / ATCC 38163 / CBS 112.46 / NRRL 194 / M139) (Aspergillus nidulans), this protein is Quinolone epoxide rearrangement protein asqO.